We begin with the raw amino-acid sequence, 447 residues long: MATTSSDRLIAGLTASIGSIESRYANPAQSVSLICRNQINGAPPIVLRSSRRSRLWLIEAIPPAKSWNGSNDGDEDIKKSDTRNYAIGGTGGHAVAGKDDRTMEIVIAAATTAALGVGNRVLYKLALIPLKQYPFFLAQLSTFGYVAVYFSILYFRYRAGIVTKEMLSVPKLPFLIVGVLESLALAAGMAAASNLSGPSTTVLSQTFLVWQILFSIIFLGRRYRINQILGCTLVAFGVIVSVASGSGAAHSFKDTGILWSLLMVFSFLLQGADTVMKEVIFLDSKKRLKGASLDLFVVNSYGSIFQVICIALLLPFLSKLWGIPFNQLPSYIRDGGACFLNIGSRITGCEGAPLLPVMFVMMNMAYNISLLRLIKISSAVVSSLASTVSVPIAVYCFTLPLPYLGVASTLPRGFVAGTIILVVGMLLYAWTPSTNTSDSIIPSPPST.

The N-terminal 48 residues, 1–48, are a transit peptide targeting the chloroplast; sequence MATTSSDRLIAGLTASIGSIESRYANPAQSVSLICRNQINGAPPIVLR. 10 helical membrane-spanning segments follow: residues 103–123, 135–155, 172–192, 200–220, 228–248, 256–276, 304–324, 351–371, 387–407, and 413–433; these read MEIV…RVLY, FFLA…ILYF, LPFL…MAAA, TTVL…IFLG, ILGC…GSGA, GILW…DTVM, IFQV…WGIP, GAPL…ISLL, TVSV…LGVA, and GFVA…WTPS.

It belongs to the CRT-like transporter family.

It is found in the plastid. It localises to the chloroplast membrane. Its function is as follows. Involved in thiol transport from the plastid to the cytosol. Transports probably both glutathione (GSH) and its precursor, gamma-glutamylcysteine (gamma-EC). Exhibits some functional redundancy with CLT3 in maintaining the root GSH pool. The polypeptide is Protein CLT1, chloroplastic (Arabidopsis thaliana (Mouse-ear cress)).